The sequence spans 219 residues: Ribose-5-phosphate isomerase A (219 aa).

Residues serine 28–threonine 31, aspartate 81–aspartate 84, and lysine 94–glycine 97 each bind substrate. The Proton acceptor role is filled by glutamate 103. Lysine 121 lines the substrate pocket.

This sequence belongs to the ribose 5-phosphate isomerase family. As to quaternary structure, homodimer.

The enzyme catalyses aldehydo-D-ribose 5-phosphate = D-ribulose 5-phosphate. It functions in the pathway carbohydrate degradation; pentose phosphate pathway; D-ribose 5-phosphate from D-ribulose 5-phosphate (non-oxidative stage): step 1/1. In terms of biological role, catalyzes the reversible conversion of ribose-5-phosphate to ribulose 5-phosphate. The chain is Ribose-5-phosphate isomerase A from Pasteurella multocida (strain Pm70).